The following is a 242-amino-acid chain: Beta-glucanase (242 aa).

A signal peptide spans 1–28 (MPYLKRVLLLLVTGLFMSLFAVTATASA). Glutamine 29 carries the pyrrolidone carboxylic acid modification. The GH16 domain occupies 29–242 (QTGGSFFDPF…HYDWVRYTKK (214 aa)). A disulfide bridge links cysteine 60 with cysteine 89. Glutamate 133 serves as the catalytic Nucleophile. Glutamate 137 serves as the catalytic Proton donor.

It belongs to the glycosyl hydrolase 16 family.

It localises to the secreted. It carries out the reaction Hydrolysis of (1-&gt;4)-beta-D-glucosidic linkages in beta-D-glucans containing (1-&gt;3)- and (1-&gt;4)-bonds.. This is Beta-glucanase (bglS) from Bacillus subtilis (strain 168).